We begin with the raw amino-acid sequence, 1224 residues long: DNA-directed RNA polymerase subunit beta'' (1224 aa).

The Zn(2+) site is built by Cys223, Cys297, Cys304, and Cys307.

The protein belongs to the RNA polymerase beta' chain family. RpoC2 subfamily. As to quaternary structure, in plastids the minimal PEP RNA polymerase catalytic core is composed of four subunits: alpha, beta, beta', and beta''. When a (nuclear-encoded) sigma factor is associated with the core the holoenzyme is formed, which can initiate transcription. The cofactor is Zn(2+).

Its subcellular location is the plastid. The protein resides in the chloroplast. It carries out the reaction RNA(n) + a ribonucleoside 5'-triphosphate = RNA(n+1) + diphosphate. Its function is as follows. DNA-dependent RNA polymerase catalyzes the transcription of DNA into RNA using the four ribonucleoside triphosphates as substrates. This chain is DNA-directed RNA polymerase subunit beta'', found in Porphyra purpurea (Red seaweed).